Here is a 3801-residue protein sequence, read N- to C-terminus: Lysosomal-trafficking regulator (3801 aa).

Residues 148–173 are disordered; that stretch reads KITHRYSVRDARKTQLSTSDSEANSD. Phosphoserine is present on serine 164. Phosphothreonine is present on threonine 165. Serine 166 carries the phosphoserine modification. Residues 662-700 form a WD 1 repeat; sequence ELSSSLSSPSYRFQGILPSSGSEDLLWKWDALKAYQNFV. Residues 1181 to 1190 show a composition bias toward basic and acidic residues; it reads AMTEKSHQSA. Disordered regions lie at residues 1181-1203 and 1221-1256; these read AMTE…FSEE and YEAD…SPND. The span at 1221–1238 shows a compositional bias: acidic residues; it reads YEADSESNPEDGETQDDG. Positions 1246–1256 are enriched in polar residues; it reads EGFSASSSPND. Phosphoserine occurs at positions 1509 and 1510. Residues 1582–1626 form a WD 2 repeat; that stretch reads SQENIFLPSKWQHLVLTYLQQPQGKRRIHGKISIWVSGQRKPDVT. Phosphoserine occurs at positions 2105, 2124, 2213, 2217, and 2264. Residues 2205 to 2215 are compositionally biased toward basic and acidic residues; that stretch reads KQLGAEPRSED. A disordered region spans residues 2205–2224; the sequence is KQLGAEPRSEDDSPGDESCP. The region spanning 3009–3115 is the BEACH-type PH domain; the sequence is AASESIRVNR…VRDDVYHNIL (107 aa). The BEACH domain maps to 3120–3422; it reads PNLLEYGNIT…QLFHMAHVSR (303 aa). WD repeat units follow at residues 3563–3602, 3614–3653, 3656–3699, 3700–3744, and 3749–3788; these read SQQY…STPS, GHTE…YVQS, GHKS…VGHV, HCRE…PVRE, and KSNK…RLKQ.

In terms of assembly, interacts with CPAP, LIP8 and ZNF521. Abundantly expressed in adult and fetal thymus, peripheral blood leukocytes, bone marrow and several regions of the adult brain.

The protein localises to the cytoplasm. Its function is as follows. Adapter protein that regulates and/or fission of intracellular vesicles such as lysosomes. Might regulate trafficking of effectors involved in exocytosis. In cytotoxic T-cells and natural killer (NK) cells, has role in the regulation of size, number and exocytosis of lytic granules. In macrophages and dendritic cells, regulates phagosome maturation by controlling the conversion of early phagosomal compartments into late phagosomes. In macrophages and dendritic cells, specifically involved in TLR3- and TLR4-induced production of pro-inflammatory cytokines by regulating the endosomal TLR3- TICAM1/TRIF and TLR4- TICAM1/TRIF signaling pathways. The polypeptide is Lysosomal-trafficking regulator (LYST) (Homo sapiens (Human)).